A 107-amino-acid chain; its full sequence is Cytochrome c-550 (107 aa).

Residues Cys11, Cys14, His15, and Met80 each coordinate heme c.

Post-translationally, binds 1 heme c group covalently per subunit.

The sequence is that of Cytochrome c-550 from Ancylobacter novellus (Thiobacillus novellus).